Reading from the N-terminus, the 626-residue chain is Elongation factor 4 (626 aa).

One can recognise a tr-type G domain in the interval 14–195; sequence SVIRNFCIIA…QIVMDVPAPH (182 aa). GTP is bound by residues 26–31 and 142–145; these read DHGKST and NKID. The interval 603 to 626 is disordered; it reads LSTGEDSNDRDTKDKIRAAQKTEG. Over residues 609–626 the composition is skewed to basic and acidic residues; that stretch reads SNDRDTKDKIRAAQKTEG.

The protein belongs to the TRAFAC class translation factor GTPase superfamily. Classic translation factor GTPase family. LepA subfamily.

The protein resides in the cell membrane. It carries out the reaction GTP + H2O = GDP + phosphate + H(+). Required for accurate and efficient protein synthesis under certain stress conditions. May act as a fidelity factor of the translation reaction, by catalyzing a one-codon backward translocation of tRNAs on improperly translocated ribosomes. Back-translocation proceeds from a post-translocation (POST) complex to a pre-translocation (PRE) complex, thus giving elongation factor G a second chance to translocate the tRNAs correctly. Binds to ribosomes in a GTP-dependent manner. This is Elongation factor 4 from Bifidobacterium longum subsp. infantis (strain ATCC 15697 / DSM 20088 / JCM 1222 / NCTC 11817 / S12).